The chain runs to 254 residues: MLKLRVIPCLDVKDGRVVKGVNFVSLRDAGDPVEQAVVYDRAGADELTFLDITASHENRDTIIDVVGRTAARVFLPLTVGGGIRSTDDMRRLLLAGADKCSINSAAISRPDFINEAARKFGSQCVVVAVDARRGGEGWEVFTHGGRRGTGIDAVGWCAEMAARGAGEILLTSMDRDGTGLGFDLDLLRAVTARVNIPVIASGGVGTLAHFVEGAEAGATGLLAASVFHFGQFTIAEVKAALAAAGLPVRPVASH.

Active-site residues include Asp11 and Asp130.

The protein belongs to the HisA/HisF family. As to quaternary structure, heterodimer of HisH and HisF.

It localises to the cytoplasm. It carries out the reaction 5-[(5-phospho-1-deoxy-D-ribulos-1-ylimino)methylamino]-1-(5-phospho-beta-D-ribosyl)imidazole-4-carboxamide + L-glutamine = D-erythro-1-(imidazol-4-yl)glycerol 3-phosphate + 5-amino-1-(5-phospho-beta-D-ribosyl)imidazole-4-carboxamide + L-glutamate + H(+). It functions in the pathway amino-acid biosynthesis; L-histidine biosynthesis; L-histidine from 5-phospho-alpha-D-ribose 1-diphosphate: step 5/9. Functionally, IGPS catalyzes the conversion of PRFAR and glutamine to IGP, AICAR and glutamate. The HisF subunit catalyzes the cyclization activity that produces IGP and AICAR from PRFAR using the ammonia provided by the HisH subunit. The sequence is that of Imidazole glycerol phosphate synthase subunit HisF from Acidiphilium cryptum (strain JF-5).